The sequence spans 316 residues: Coiled-coil domain-containing protein 42 (316 aa).

Coiled coils occupy residues 39–146 (SPSI…SAKL) and 178–232 (LVSM…DRAR).

The protein belongs to the CFAP73 family. As to quaternary structure, interacts with ODF1 and ODF2. Interacts with CCDC38. Interacts with CCDC146. Interacts with CFAP53.

The protein localises to the cytoplasm. Its subcellular location is the perinuclear region. It is found in the cytoskeleton. The protein resides in the cell projection. It localises to the cilium. The protein localises to the flagellum. Its subcellular location is the microtubule organizing center. It is found in the centrosome. Its function is as follows. Essential for male fertility. Required for sperm development. The chain is Coiled-coil domain-containing protein 42 from Homo sapiens (Human).